A 549-amino-acid polypeptide reads, in one-letter code: Leiomodin-2 (549 aa).

Positions 1-42 are tropomyosin-binding; that stretch reads MSTFGYRRGLSKYESIDEDELLASLTAEELKELERELEDIEP. The interaction with tropomyosin alpha stretch occupies residues 1–47; it reads MSTFGYRRGLSKYESIDEDELLASLTAEELKELERELEDIEPDRNLP. 3 interaction with actin regions span residues 1–164, 165–499, and 523–542; these read MSTF…PDNS, KPKT…KEIK, and AHEN…LRRV. Phosphoserine is present on residues Ser-11, Ser-15, and Ser-24. Disordered regions lie at residues 91–166, 179–200, 358–455, and 469–534; these read KLAE…NSKP, TNGN…HPCG, MDKQ…PGKK, and ESAQ…IRGS. 2 stretches are compositionally biased toward acidic residues: residues 95–105 and 113–143; these read EDKEESEEELI and VSEE…EEVT. Composition is skewed to polar residues over residues 150 to 163 and 179 to 192; these read INGT…NPDN and TNGN…NTES. Basic and acidic residues predominate over residues 358–376; sequence MDKQRQKRMQEQKQQEGHD. The segment covering 390 to 401 has biased composition (polar residues); that stretch reads TPGSSPYASPRQ. Ser-406 bears the Phosphoserine mark. Positions 420–452 are enriched in pro residues; that stretch reads PPSPVAPPPPPPPPPLPPHMLPPPPPPPAPPLP. The stretch at 457–515 forms a coiled coil; that stretch reads ITRNIAEVIKQQESAQRALQNGQRKKKGKKVKKQPNNILKEIKNSLRSVQEKKMEESSR. Residues 469 to 478 are compositionally biased toward polar residues; sequence ESAQRALQNG. The segment covering 479-489 has biased composition (basic residues); sequence QRKKKGKKVKK. Basic and acidic residues predominate over residues 496–514; the sequence is KEIKNSLRSVQEKKMEESS. A WH2 domain is found at 523–542; sequence AHENLMEAIRGSSIRQLRRV.

Belongs to the tropomodulin family. Can bind at least three actin monomers and thereby provides a nucleus for actin filament formation. Interacts (via N-terminus) with tropomyosin alpha (TPM1) (via N-terminus). May also interact with TPM2 (via N-terminus). Interacts with FLII.

It is found in the cytoplasm. It localises to the myofibril. The protein resides in the sarcomere. The protein localises to the m line. Its subcellular location is the cytoskeleton. In terms of biological role, mediates nucleation of actin filaments and thereby promotes actin polymerization. Plays a role in the regulation of actin filament length. Required for normal sarcomere organization in the heart, and for normal heart function. The protein is Leiomodin-2 (Lmod2) of Rattus norvegicus (Rat).